The chain runs to 309 residues: S-methyl-5'-thioadenosine phosphorylase (309 aa).

Phosphate contacts are provided by residues Thr19, 64–65 (RH), and 97–98 (SA). Met201 is a substrate binding site. Ser202 contributes to the phosphate binding site. Substrate is bound at residue 225–227 (DYD).

The protein belongs to the PNP/MTAP phosphorylase family. MTAP subfamily. Homotrimer.

It localises to the cytoplasm. Its subcellular location is the nucleus. It carries out the reaction S-methyl-5'-thioadenosine + phosphate = 5-(methylsulfanyl)-alpha-D-ribose 1-phosphate + adenine. It functions in the pathway amino-acid biosynthesis; L-methionine biosynthesis via salvage pathway; S-methyl-5-thio-alpha-D-ribose 1-phosphate from S-methyl-5'-thioadenosine (phosphorylase route): step 1/1. Catalyzes the reversible phosphorylation of S-methyl-5'-thioadenosine (MTA) to adenine and 5-methylthioribose-1-phosphate. Involved in the breakdown of MTA, a major by-product of polyamine biosynthesis. Responsible for the first step in the methionine salvage pathway after MTA has been generated from S-adenosylmethionine. Has broad substrate specificity with 6-aminopurine nucleosides as preferred substrates. The protein is S-methyl-5'-thioadenosine phosphorylase of Tuber melanosporum (strain Mel28) (Perigord black truffle).